Reading from the N-terminus, the 213-residue chain is UPF0301 protein Aave_0907 (213 aa).

A disordered region spans residues 93–120; it reads MGPSSGKQAAGEGGAQAEGEGAEESAYA.

The protein belongs to the UPF0301 (AlgH) family.

This Paracidovorax citrulli (strain AAC00-1) (Acidovorax citrulli) protein is UPF0301 protein Aave_0907.